A 140-amino-acid polypeptide reads, in one-letter code: Nucleoside diphosphate kinase (140 aa).

ATP contacts are provided by K11, F59, R87, T93, R104, and N114. H117 serves as the catalytic Pros-phosphohistidine intermediate.

Belongs to the NDK family. Homotetramer. It depends on Mg(2+) as a cofactor.

The protein resides in the cytoplasm. The catalysed reaction is a 2'-deoxyribonucleoside 5'-diphosphate + ATP = a 2'-deoxyribonucleoside 5'-triphosphate + ADP. It carries out the reaction a ribonucleoside 5'-diphosphate + ATP = a ribonucleoside 5'-triphosphate + ADP. Its function is as follows. Major role in the synthesis of nucleoside triphosphates other than ATP. The ATP gamma phosphate is transferred to the NDP beta phosphate via a ping-pong mechanism, using a phosphorylated active-site intermediate. The polypeptide is Nucleoside diphosphate kinase (Rhodovulum sulfidophilum (Rhodobacter sulfidophilus)).